Reading from the N-terminus, the 593-residue chain is Probable serine/threonine-protein kinase samkB (593 aa).

An SAM domain is found at Trp29 to Asn93. The tract at residues Glu108 to Thr157 is disordered. Low complexity predominate over residues Asn113 to Asn153. Residues Tyr186–Phe438 form the Protein kinase domain. ATP is bound by residues Ile192 to Val200 and Lys216. Catalysis depends on Asp313, which acts as the Proton acceptor.

The protein belongs to the protein kinase superfamily. Ser/Thr protein kinase family.

It catalyses the reaction L-seryl-[protein] + ATP = O-phospho-L-seryl-[protein] + ADP + H(+). The catalysed reaction is L-threonyl-[protein] + ATP = O-phospho-L-threonyl-[protein] + ADP + H(+). This Dictyostelium discoideum (Social amoeba) protein is Probable serine/threonine-protein kinase samkB (samkB).